The following is a 353-amino-acid chain: Protein RecA (353 aa).

67–74 (GPESSGKT) contributes to the ATP binding site.

Belongs to the RecA family.

Its subcellular location is the cytoplasm. Its function is as follows. Can catalyze the hydrolysis of ATP in the presence of single-stranded DNA, the ATP-dependent uptake of single-stranded DNA by duplex DNA, and the ATP-dependent hybridization of homologous single-stranded DNAs. It interacts with LexA causing its activation and leading to its autocatalytic cleavage. The sequence is that of Protein RecA from Shewanella woodyi (strain ATCC 51908 / MS32).